The following is a 145-amino-acid chain: Basic phospholipase A2 cPt10 (145 aa).

Residues 1-21 (MYPAHLLVLLAVCVSLLGASA) form the signal peptide. The propeptide occupies 22–27 (IPPLPL). 7 cysteine pairs are disulfide-bonded: cysteine 38–cysteine 98, cysteine 54–cysteine 144, cysteine 56–cysteine 72, cysteine 71–cysteine 125, cysteine 78–cysteine 118, cysteine 87–cysteine 111, and cysteine 105–cysteine 116. Positions 55, 57, and 59 each coordinate Ca(2+). Residue histidine 75 is part of the active site. Aspartate 76 is a Ca(2+) binding site. Aspartate 119 is a catalytic residue.

It belongs to the phospholipase A2 family. Group I subfamily. D49 sub-subfamily. It depends on Ca(2+) as a cofactor. As to expression, expressed by the venom gland.

It is found in the secreted. It carries out the reaction a 1,2-diacyl-sn-glycero-3-phosphocholine + H2O = a 1-acyl-sn-glycero-3-phosphocholine + a fatty acid + H(+). PLA2 catalyzes the calcium-dependent hydrolysis of the 2-acyl groups in 3-sn-phosphoglycerides. This chain is Basic phospholipase A2 cPt10, found in Laticauda semifasciata (Black-banded sea krait).